Here is a 232-residue protein sequence, read N- to C-terminus: Large ribosomal subunit protein uL1 (232 aa).

It belongs to the universal ribosomal protein uL1 family. In terms of assembly, part of the 50S ribosomal subunit.

In terms of biological role, binds directly to 23S rRNA. The L1 stalk is quite mobile in the ribosome, and is involved in E site tRNA release. Its function is as follows. Protein L1 is also a translational repressor protein, it controls the translation of the L11 operon by binding to its mRNA. The chain is Large ribosomal subunit protein uL1 from Amoebophilus asiaticus (strain 5a2).